A 1322-amino-acid polypeptide reads, in one-letter code: Protein fantom (1322 aa).

The N-terminal stretch at 1-22 (MVSARYPIEKWSRPQLEDHFHN) is a signal peptide. A coiled-coil region spans residues 15-89 (QLEDHFHNVV…MKLKAAKQQL (75 aa)). A compositionally biased stretch (polar residues) spans 108–119 (RSTFRQPPSTFR). Disordered stretches follow at residues 108–151 (RSTF…GEKL), 189–275 (KSSV…PDQT), and 392–418 (RIEE…SQSE). A compositionally biased stretch (low complexity) spans 195–217 (SSPPTRLSTSSSSKSSSSNNNND). Acidic residues predominate over residues 224-234 (ELEEMSEMSDD). The stretch at 274–362 (QTEKVLLDKL…EDQKKFEAMR (89 aa)) forms a coiled coil. Residues 456 to 538 (ASENSLARWQ…FMLEEQIRTI (83 aa)) are a coiled coil. Disordered stretches follow at residues 891 to 1094 (AELH…KPRN) and 1121 to 1149 (TDPL…PVPL). A compositionally biased stretch (low complexity) spans 918-927 (TDSSDTSFSH). The segment covering 956–975 (SDGEEEADRIVFDDDDDEIE) has biased composition (acidic residues). The span at 984–996 (RDPEPLEVPERQV) shows a compositional bias: basic and acidic residues. Residues 1015 to 1029 (NGTNESKESTPVTQR) show a composition bias toward polar residues. Over residues 1042-1067 (PELEPESGPEPEPVVESEPNEVAETE) the composition is skewed to acidic residues. Residues 1068–1080 (EDRKRELKTEELK) are compositionally biased toward basic and acidic residues. Residues 1127–1139 (SVPPSESSSTSSP) are compositionally biased toward low complexity.

This sequence belongs to the RPGRIP1 family. As to expression, expressed at the transition zone at the base of cilia. Expressed in ciliated sensory neurons, including the amphid neurons in the head.

It localises to the cell projection. The protein localises to the cilium. Thought to have an important role in cilia formation and cilia-mediated chemosensation. Involved in the docking of other MKS/MKSR proteins localized to the transition zone of the cilia. In Caenorhabditis elegans, this protein is Protein fantom (mks-5).